The primary structure comprises 513 residues: ATP synthase subunit alpha (513 aa).

Residue 169–176 participates in ATP binding; sequence GDRQTGKT.

This sequence belongs to the ATPase alpha/beta chains family. F-type ATPases have 2 components, CF(1) - the catalytic core - and CF(0) - the membrane proton channel. CF(1) has five subunits: alpha(3), beta(3), gamma(1), delta(1), epsilon(1). CF(0) has three main subunits: a(1), b(2) and c(9-12). The alpha and beta chains form an alternating ring which encloses part of the gamma chain. CF(1) is attached to CF(0) by a central stalk formed by the gamma and epsilon chains, while a peripheral stalk is formed by the delta and b chains.

The protein resides in the cell inner membrane. It catalyses the reaction ATP + H2O + 4 H(+)(in) = ADP + phosphate + 5 H(+)(out). In terms of biological role, produces ATP from ADP in the presence of a proton gradient across the membrane. The alpha chain is a regulatory subunit. The polypeptide is ATP synthase subunit alpha (Polynucleobacter necessarius subsp. necessarius (strain STIR1)).